Here is a 229-residue protein sequence, read N- to C-terminus: uncharacterized protein (229 aa).

This is an uncharacterized protein from Treponema pallidum (strain Nichols).